Consider the following 435-residue polypeptide: Serine--tRNA ligase (435 aa).

233 to 235 (TAE) serves as a coordination point for L-serine. 264-266 (RAE) lines the ATP pocket. L-serine is bound at residue Glu-287. 351 to 354 (EISS) contributes to the ATP binding site. Residue Ser-386 participates in L-serine binding.

It belongs to the class-II aminoacyl-tRNA synthetase family. Type-1 seryl-tRNA synthetase subfamily. As to quaternary structure, homodimer. The tRNA molecule binds across the dimer.

Its subcellular location is the cytoplasm. The catalysed reaction is tRNA(Ser) + L-serine + ATP = L-seryl-tRNA(Ser) + AMP + diphosphate + H(+). The enzyme catalyses tRNA(Sec) + L-serine + ATP = L-seryl-tRNA(Sec) + AMP + diphosphate + H(+). The protein operates within aminoacyl-tRNA biosynthesis; selenocysteinyl-tRNA(Sec) biosynthesis; L-seryl-tRNA(Sec) from L-serine and tRNA(Sec): step 1/1. Catalyzes the attachment of serine to tRNA(Ser). Is also able to aminoacylate tRNA(Sec) with serine, to form the misacylated tRNA L-seryl-tRNA(Sec), which will be further converted into selenocysteinyl-tRNA(Sec). This is Serine--tRNA ligase from Anaeromyxobacter sp. (strain K).